Reading from the N-terminus, the 72-residue chain is Translation initiation factor IF-1 (72 aa).

In terms of domain architecture, S1-like spans 1 to 72; that stretch reads MAKEGAIEVE…TRGRIVYRYK (72 aa).

The protein belongs to the IF-1 family. In terms of assembly, component of the 30S ribosomal translation pre-initiation complex which assembles on the 30S ribosome in the order IF-2 and IF-3, IF-1 and N-formylmethionyl-tRNA(fMet); mRNA recruitment can occur at any time during PIC assembly.

Its subcellular location is the cytoplasm. In terms of biological role, one of the essential components for the initiation of protein synthesis. Stabilizes the binding of IF-2 and IF-3 on the 30S subunit to which N-formylmethionyl-tRNA(fMet) subsequently binds. Helps modulate mRNA selection, yielding the 30S pre-initiation complex (PIC). Upon addition of the 50S ribosomal subunit IF-1, IF-2 and IF-3 are released leaving the mature 70S translation initiation complex. The protein is Translation initiation factor IF-1 of Corynebacterium efficiens (strain DSM 44549 / YS-314 / AJ 12310 / JCM 11189 / NBRC 100395).